The following is a 230-amino-acid chain: MVPEYSRFYNILGYNFKDCTLLIRALTHRSKTKKNYERLEFLGDSVLSFVIAEVLYKQFTDLAEGKLSQLRSKLVKGTTLAQLASSLKMDEYIILGASEQGGHKREKILEDVFEAVIGAIYLDSDFATVKKVILKWYQPIISSINLDTIKVKDSKSKLQEILLQNALSLPEYSIETIDGKDHEQQFTVVAVSKDLNLRVKAQGTSRKKAEQKTAEKMIEMLSQQGLHEKK.

In terms of domain architecture, RNase III spans tyrosine 5–aspartate 125. Position 40 (glutamate 40) interacts with Mg(2+). Aspartate 44 is an active-site residue. Aspartate 111 and glutamate 114 together coordinate Mg(2+). Glutamate 114 is an active-site residue. Positions aspartate 153–glutamine 223 constitute a DRBM domain.

Belongs to the ribonuclease III family. As to quaternary structure, homodimer. The cofactor is Mg(2+).

The protein resides in the cytoplasm. The catalysed reaction is Endonucleolytic cleavage to 5'-phosphomonoester.. Its function is as follows. Digests double-stranded RNA. Involved in the processing of primary rRNA transcript to yield the immediate precursors to the large and small rRNAs (23S and 16S). Processes some mRNAs, and tRNAs when they are encoded in the rRNA operon. Processes pre-crRNA and tracrRNA of type II CRISPR loci if present in the organism. The polypeptide is Ribonuclease 3 (Francisella tularensis subsp. tularensis (strain WY96-3418)).